The sequence spans 464 residues: Asparagine--tRNA ligase (464 aa).

The protein belongs to the class-II aminoacyl-tRNA synthetase family. As to quaternary structure, homodimer.

The protein resides in the cytoplasm. It carries out the reaction tRNA(Asn) + L-asparagine + ATP = L-asparaginyl-tRNA(Asn) + AMP + diphosphate + H(+). The chain is Asparagine--tRNA ligase from Xanthomonas campestris pv. campestris (strain 8004).